An 802-amino-acid chain; its full sequence is Valine--tRNA ligase (802 aa).

Positions 45 to 55 match the 'HIGH' region motif; it reads PTISGQLHIGH. The 'KMSKS' region signature appears at 524–528; sequence KMSKS. An ATP-binding site is contributed by Lys-527.

Belongs to the class-I aminoacyl-tRNA synthetase family. ValS type 2 subfamily. In terms of assembly, monomer.

The protein localises to the cytoplasm. The catalysed reaction is tRNA(Val) + L-valine + ATP = L-valyl-tRNA(Val) + AMP + diphosphate. Catalyzes the attachment of valine to tRNA(Val). As ValRS can inadvertently accommodate and process structurally similar amino acids such as threonine, to avoid such errors, it has a 'posttransfer' editing activity that hydrolyzes mischarged Thr-tRNA(Val) in a tRNA-dependent manner. The sequence is that of Valine--tRNA ligase from Ehrlichia canis (strain Jake).